We begin with the raw amino-acid sequence, 1165 residues long: Transient receptor potential cation channel subfamily M member 5 (1165 aa).

Residues 1–715 (MVEKSSERFD…LRRWNRFWSA (715 aa)) are Cytoplasmic-facing. S121 bears the Phosphoserine mark. E212, C324, D333, D336, and E337 together coordinate Ca(2+). A helical transmembrane segment spans residues 716–740 (PVTVFMGNVIMYFAFLILFSYVLLL). Topologically, residues 741-751 (DFRPPPPYGPS) are extracellular. A helical transmembrane segment spans residues 752-771 (AAEIILYFWVFTLVLEEIRQ). 2 residues coordinate Ca(2+): E768 and Q771. The Cytoplasmic segment spans residues 772 to 792 (SFFTDEDMSILKKMKLYVEDN). Residues 793–811 (WNKCDMVAISLFVVGLSCR) form a helical membrane-spanning segment. The Ca(2+) site is built by N794 and D797. Residues 812 to 818 (MAMSTYE) lie on the Extracellular side of the membrane. A helical transmembrane segment spans residues 819 to 841 (AGRTVLALDFMVFTLRLIHIFAI). Residues 842 to 850 (HKQLGPKII) are Cytoplasmic-facing. The chain crosses the membrane as a helical span at residues 851–880 (IVERMIKDVFFFLFFLSVWLIAYGVTTQAL). Residues 881–889 (LHPNDPRID) are Extracellular-facing. An intramembrane region (pore-forming) is located at residues 890 to 930 (WVFRRALYRPYLHIFGQIPLEEIDAAKMPDDNCTTDVQEII). The Selectivity filter motif lies at 904–906 (FGQ). Residues 931-942 (LGTLPPCPNIYA) are Extracellular-facing. Residues 943-977 (NWLVILLLVIYLLVTNVLLLNLLIAMFSYTFQVVQ) form a helical membrane-spanning segment. Residues 978-1165 (ENADIFWKFQ…TDKKLPFIDH (188 aa)) are Cytoplasmic-facing. E994 serves as a coordination point for Ca(2+). A disordered region spans residues 1122 to 1165 (RDAPKAPRSIAGSSRDQQPQGAKRQQPAGHPAYGTDKKLPFIDH). Over residues 1132-1141 (AGSSRDQQPQ) the composition is skewed to polar residues. Residues 1156–1165 (TDKKLPFIDH) show a composition bias toward basic and acidic residues.

It belongs to the transient receptor (TC 1.A.4) family. LTrpC subfamily. TRPM5 sub-subfamily. In terms of assembly, homotetramer.

It localises to the cell membrane. The enzyme catalyses Na(+)(in) = Na(+)(out). It carries out the reaction K(+)(in) = K(+)(out). Its activity is regulated as follows. Ca(2+)-activated cation channel. Displays voltage dependence modulation. Regulated by PI(4,5)P2 levels. PI(4,5)P 2 reverses the Ca(2+) -induced desensitization of channels. Is highly temperature-sensitive. Its function is as follows. Monovalent cation-selective ion channel activated by intracellular Ca(2+) in a voltage- and temperature-dependent manner. Mediates the transport of Na(+), K(+) and Cs(+) ions equally well. Activated directly by increase in intracellular Ca(2+), but is impermeable to it. The activation mechanism of TRPM5 involves a multistep process. TRPM5 activation involves ligand binding (i.e., tastant molecule, glucose stimulation) to Gq/G-protein coupled receptors (GPCR) and leads to the breakdown of phosphatidylinositol bisphosphate (PIP2) into diacylglycerol (DAG) and inositol trisphosphate (IP3), IP3 binds to its receptors in the endoplasmic reticulum and cause Ca(2+) release. Simultaneously with the intracellular Ca(2+) release, DAG activates the protein kinase C (PKC), which phosphorylates the TRPM5 channel. This phosphorylation combined with the bound Ca(2+), leads to a robust inward current allowing the entry of sodium ions (Na+) into the cell. This ion influx depolarizes the cell membrane, generating action potentials that propagate TRPM5 signals. The sequence is that of Transient receptor potential cation channel subfamily M member 5 from Danio rerio (Zebrafish).